The following is a 172-amino-acid chain: 3-phenylpropionate/cinnamic acid dioxygenase subunit beta (172 aa).

Belongs to the bacterial ring-hydroxylating dioxygenase beta subunit family. This dioxygenase system consists of four proteins: the two subunits of the hydroxylase component (HcaE and HcaF), a ferredoxin (HcaC) and a ferredoxin reductase (HcaD).

The enzyme catalyses 3-phenylpropanoate + NADH + O2 + H(+) = 3-(cis-5,6-dihydroxycyclohexa-1,3-dien-1-yl)propanoate + NAD(+). The catalysed reaction is (E)-cinnamate + NADH + O2 + H(+) = (2E)-3-(cis-5,6-dihydroxycyclohexa-1,3-dien-1-yl)prop-2-enoate + NAD(+). The protein operates within aromatic compound metabolism; 3-phenylpropanoate degradation. In terms of biological role, part of the multicomponent 3-phenylpropionate dioxygenase. Converts 3-phenylpropionic acid (PP) and cinnamic acid (CI) into 3-phenylpropionate-dihydrodiol (PP-dihydrodiol) and cinnamic acid-dihydrodiol (CI-dihydrodiol), respectively. This chain is 3-phenylpropionate/cinnamic acid dioxygenase subunit beta, found in Shigella boydii serotype 4 (strain Sb227).